Reading from the N-terminus, the 76-residue chain is Small ribosomal subunit protein bS18 (76 aa).

The protein belongs to the bacterial ribosomal protein bS18 family. In terms of assembly, part of the 30S ribosomal subunit. Forms a tight heterodimer with protein bS6.

Binds as a heterodimer with protein bS6 to the central domain of the 16S rRNA, where it helps stabilize the platform of the 30S subunit. The chain is Small ribosomal subunit protein bS18 from Aeromonas hydrophila subsp. hydrophila (strain ATCC 7966 / DSM 30187 / BCRC 13018 / CCUG 14551 / JCM 1027 / KCTC 2358 / NCIMB 9240 / NCTC 8049).